A 64-amino-acid chain; its full sequence is Large ribosomal subunit protein bL35 (64 aa).

The segment covering 1–42 (MPKAKTHSGASKRFRRTGTGKIVRQKANRRHLLEHKSSKRTR) has biased composition (basic residues). The disordered stretch occupies residues 1 to 64 (MPKAKTHSGA…TKRVKSLLNG (64 aa)).

The protein belongs to the bacterial ribosomal protein bL35 family.

This is Large ribosomal subunit protein bL35 from Mycobacterium ulcerans (strain Agy99).